Here is a 273-residue protein sequence, read N- to C-terminus: Putative phosphoenolpyruvate synthase regulatory protein (273 aa).

ADP is bound at residue 153-160 (GVSRCGKT).

Belongs to the pyruvate, phosphate/water dikinase regulatory protein family. PSRP subfamily.

The catalysed reaction is [pyruvate, water dikinase] + ADP = [pyruvate, water dikinase]-phosphate + AMP + H(+). The enzyme catalyses [pyruvate, water dikinase]-phosphate + phosphate + H(+) = [pyruvate, water dikinase] + diphosphate. Bifunctional serine/threonine kinase and phosphorylase involved in the regulation of the phosphoenolpyruvate synthase (PEPS) by catalyzing its phosphorylation/dephosphorylation. This is Putative phosphoenolpyruvate synthase regulatory protein from Sodalis glossinidius (strain morsitans).